We begin with the raw amino-acid sequence, 172 residues long: S-ribosylhomocysteine lyase (172 aa).

Fe cation contacts are provided by His54, His58, and Cys128.

Belongs to the LuxS family. In terms of assembly, homodimer. It depends on Fe cation as a cofactor.

The catalysed reaction is S-(5-deoxy-D-ribos-5-yl)-L-homocysteine = (S)-4,5-dihydroxypentane-2,3-dione + L-homocysteine. In terms of biological role, involved in the synthesis of autoinducer 2 (AI-2) which is secreted by bacteria and is used to communicate both the cell density and the metabolic potential of the environment. The regulation of gene expression in response to changes in cell density is called quorum sensing. Catalyzes the transformation of S-ribosylhomocysteine (RHC) to homocysteine (HC) and 4,5-dihydroxy-2,3-pentadione (DPD). This Aliivibrio salmonicida (strain LFI1238) (Vibrio salmonicida (strain LFI1238)) protein is S-ribosylhomocysteine lyase.